The chain runs to 257 residues: Imidazole glycerol phosphate synthase subunit HisF (257 aa).

Catalysis depends on residues aspartate 11 and aspartate 130.

The protein belongs to the HisA/HisF family. As to quaternary structure, heterodimer of HisH and HisF.

The protein resides in the cytoplasm. It carries out the reaction 5-[(5-phospho-1-deoxy-D-ribulos-1-ylimino)methylamino]-1-(5-phospho-beta-D-ribosyl)imidazole-4-carboxamide + L-glutamine = D-erythro-1-(imidazol-4-yl)glycerol 3-phosphate + 5-amino-1-(5-phospho-beta-D-ribosyl)imidazole-4-carboxamide + L-glutamate + H(+). It functions in the pathway amino-acid biosynthesis; L-histidine biosynthesis; L-histidine from 5-phospho-alpha-D-ribose 1-diphosphate: step 5/9. Its function is as follows. IGPS catalyzes the conversion of PRFAR and glutamine to IGP, AICAR and glutamate. The HisF subunit catalyzes the cyclization activity that produces IGP and AICAR from PRFAR using the ammonia provided by the HisH subunit. The sequence is that of Imidazole glycerol phosphate synthase subunit HisF from Aliivibrio salmonicida (strain LFI1238) (Vibrio salmonicida (strain LFI1238)).